Consider the following 91-residue polypeptide: Small ribosomal subunit protein uS15c (91 aa).

The protein belongs to the universal ribosomal protein uS15 family. Part of the 30S ribosomal subunit.

The protein resides in the plastid. Its subcellular location is the chloroplast. The sequence is that of Small ribosomal subunit protein uS15c (rps15) from Phalaenopsis aphrodite subsp. formosana (Moth orchid).